A 463-amino-acid chain; its full sequence is Probable ECA polymerase (463 aa).

The next 11 helical transmembrane spans lie at 6–26, 39–59, 65–85, 112–132, 154–174, 180–200, 201–221, 222–242, 340–360, 377–397, and 408–428; these read FGGL…LTWM, FSLL…VLVF, VVPV…YAVY, ANLT…IFFL, GVAL…VYFL, AWLL…VIVG, GTRA…IVRG, WITL…MFWL, LVVM…GLVI, YKAA…IVLT, and VVFF…LYWL.

It belongs to the WzyE family. In terms of assembly, probably part of a complex composed of WzxE, WzyE and WzzE.

The protein localises to the cell inner membrane. Its pathway is bacterial outer membrane biogenesis; enterobacterial common antigen biosynthesis. Functionally, probably involved in the polymerization of enterobacterial common antigen (ECA) trisaccharide repeat units. In Pectobacterium atrosepticum (strain SCRI 1043 / ATCC BAA-672) (Erwinia carotovora subsp. atroseptica), this protein is Probable ECA polymerase.